The following is a 452-amino-acid chain: Golgi reassembly-stacking protein 2 (452 aa).

The N-myristoyl glycine moiety is linked to residue G2. PDZ GRASP-type domains lie at 15–105 and 111–199; these read EGYH…FCSF and NVWH…YGYL. The segment at 15-215 is GRASP; that stretch reads EGYHVLRVQE…PFEEGKKISL (201 aa). 2 positions are modified to dimethylated arginine: R30 and R47. The segment at 194-199 is important for membrane binding; sequence IGYGYL. S214 carries the post-translational modification Phosphoserine. Phosphothreonine occurs at positions 222 and 225. The span at 372-424 shows a compositional bias: low complexity; sequence PESSSAASSGELLSSLPPTSNAPSDPATTTAKADAASSLTVDVTPPTAKAPTT. A disordered region spans residues 372-452; that stretch reads PESSSAASSG…AVDANASESP (81 aa). Residue S409 is modified to Phosphoserine. Phosphothreonine occurs at positions 415 and 433. Residues S436, S441, S449, and S451 each carry the phosphoserine modification.

It belongs to the GORASP family. In terms of assembly, homodimer. Homooligomer. ER stress induces phosphorylation-dependent monomerization. Interacts with BLZF1/Golgin 45. Identified in a complex with RAB2 and GORASP2. Interacts with JAM2 and JAM3. Interacts with members of the p24 cargo receptors. Interacts with CNIH1 and the cytoplasmic domain of transmembrane TGFA, prior its transit in the trans-Golgi. Interacts with KCTD5. Interacts with TMED2 and TMED3. Interacts with SEC16A in response to ER stress. Interacts (via PDZ GRASP-type 1 domain) with core-glycosylated CFTR in response to ER stress. In terms of processing, myristoylated. Myristoylation is essential for the Golgi targeting. Palmitoylated. Post-translationally, phosphorylated in mitotic cells. ER stress-induced phosphorylation at Ser-441 induces monomerization and subsequent relocalization from Golgi to ER which is essential for mediating unconventional (ER/Golgi-independent) trafficking of CFTR to the cell membrane.

It localises to the golgi apparatus membrane. It is found in the endoplasmic reticulum membrane. The protein localises to the golgi apparatus. In terms of biological role, key structural protein of the Golgi apparatus. The membrane cisternae of the Golgi apparatus adhere to each other to form stacks, which are aligned side by side to form the Golgi ribbon. Acting in concert with GORASP1/GRASP65, is required for the formation and maintenance of the Golgi ribbon, and may be dispensable for the formation of stacks. However, other studies suggest that GORASP2 plays a role in the assembly and membrane stacking of the Golgi cisternae, and in the process by which Golgi stacks reform after breakdown during mitosis and meiosis. May regulate the intracellular transport and presentation of a defined set of transmembrane proteins, such as transmembrane TGFA. Required for normal acrosome formation during spermiogenesis and normal male fertility, probably by promoting colocalization of JAM2 and JAM3 at contact sites between germ cells and Sertoli cells. Mediates ER stress-induced unconventional (ER/Golgi-independent) trafficking of core-glycosylated CFTR to cell membrane. This chain is Golgi reassembly-stacking protein 2 (GORASP2), found in Homo sapiens (Human).